Here is a 105-residue protein sequence, read N- to C-terminus: U2-lycotoxin-Ls1c (105 aa).

Residues 1–17 (MIKYVLISALLVVAVYS) form the signal peptide. Residues 18–41 (FTIEDSEDALLEEAEDELDTEEER) constitute a propeptide that is removed on maturation. Intrachain disulfides connect Cys51–Cys67, Cys58–Cys97, Cys60–Cys83, and Cys69–Cys81.

Belongs to the neurotoxin 04 (omega-agtx) family. 01 (type I omega-agtx) subfamily. As to expression, expressed by the venom gland.

It is found in the secreted. Functionally, insecticidal to house crickets. It induces an excitatory slow-onset impact that leads to irreversible spastic paralysis. It also modifies human voltage-gated potassium channel Kv1.5/KCNA5. Most likely, it binds to the voltage-sensing domain of the channel, suggesting it does not block the pore but prevents its opening at physiological membrane potentials. The recombinant peptide binds to the channel in an irreversible manner and slows down the hKv1.5 current activation kinetics. It is not toxic to mice, when intracranially injected (at 0.5 ug/g mouse). This chain is U2-lycotoxin-Ls1c, found in Lycosa singoriensis (Wolf spider).